A 209-amino-acid polypeptide reads, in one-letter code: Putative 3-methyladenine DNA glycosylase (209 aa).

Residues 189-209 (YISKTQPGPPPKKRKKGLESS) form a disordered region. Over residues 199 to 209 (PKKRKKGLESS) the composition is skewed to basic residues.

Belongs to the DNA glycosylase MPG family.

The chain is Putative 3-methyladenine DNA glycosylase from Chlorobaculum tepidum (strain ATCC 49652 / DSM 12025 / NBRC 103806 / TLS) (Chlorobium tepidum).